A 250-amino-acid polypeptide reads, in one-letter code: Isoprenyl transferase (250 aa).

Aspartate 26 is a catalytic residue. Residue aspartate 26 coordinates Mg(2+). Substrate contacts are provided by residues 27 to 30, tryptophan 31, arginine 39, histidine 43, and 71 to 73; these read GNGR and STE. Residue asparagine 74 is the Proton acceptor of the active site. Substrate-binding positions include tryptophan 75, arginine 77, arginine 198, and 204 to 206; that span reads RLS. Glutamate 217 contacts Mg(2+).

This sequence belongs to the UPP synthase family. Homodimer. It depends on Mg(2+) as a cofactor.

Its function is as follows. Catalyzes the condensation of isopentenyl diphosphate (IPP) with allylic pyrophosphates generating different type of terpenoids. This chain is Isoprenyl transferase, found in Streptococcus agalactiae serotype III (strain NEM316).